A 208-amino-acid chain; its full sequence is Putative proteasome subunit alpha type-4-B (208 aa).

The protein belongs to the peptidase T1A family. In terms of assembly, component of the 20S core complex of the 26S proteasome. The 26S proteasome is composed of a core protease (CP), known as the 20S proteasome, capped at one or both ends by the 19S regulatory particle (RP/PA700). The 20S proteasome core is composed of 28 subunits that are arranged in four stacked rings, resulting in a barrel-shaped structure. The two end rings are each formed by seven alpha subunits, and the two central rings are each formed by seven beta subunits. The catalytic chamber with the active sites is on the inside of the barrel.

It is found in the cytoplasm. Its subcellular location is the nucleus. Functionally, the proteasome is a multicatalytic proteinase complex which is characterized by its ability to cleave peptides with Arg, Phe, Tyr, Leu, and Glu adjacent to the leaving group at neutral or slightly basic pH. The proteasome has an ATP-dependent proteolytic activity. The protein is Putative proteasome subunit alpha type-4-B (PAC2) of Arabidopsis thaliana (Mouse-ear cress).